The following is a 286-amino-acid chain: uncharacterized protein (286 aa).

Positions Met1 to Phe146 constitute an Integrase catalytic domain. Positions Arg252–Lys263 are enriched in basic residues. The segment at Arg252–Met286 is disordered. A compositionally biased stretch (basic and acidic residues) spans Lys264–Asp273. A compositionally biased stretch (low complexity) spans Thr274–Met286.

This is an uncharacterized protein from Caenorhabditis elegans.